A 101-amino-acid chain; its full sequence is DNA-binding protein Fis (101 aa).

Positions 77–96 form a DNA-binding region, H-T-H motif; the sequence is QTRAANMLGINRGTLRKKLK.

The protein belongs to the transcriptional regulatory Fis family. As to quaternary structure, homodimer.

Its function is as follows. Activates ribosomal RNA transcription. Plays a direct role in upstream activation of rRNA promoters. The polypeptide is DNA-binding protein Fis (Shewanella halifaxensis (strain HAW-EB4)).